The following is a 127-amino-acid chain: Protein NEGATIVE REGULATOR OF RESISTANCE (127 aa).

2 disordered regions span residues Met-1–Val-28 and Thr-47–Ala-127. Residues Pro-112 to Ala-127 show a composition bias toward low complexity.

The protein belongs to the NPR1-interactor family. As to quaternary structure, interacts with NPR1/NH1. Interacts with NPR3/NH3.

Its subcellular location is the nucleus. In terms of biological role, acts as a negative regulator of disease resistance. Acts on basal resistance, age-related resistance and resistance mediated by the LRR receptor kinase XA21. Plants over-expressing NRR display enhanced susceptibility to the bacterial blight Xanthomonas oryzae pv. oryzae (Xoo). Binds to and represses NPR1/NH1-mediated transcriptional activation of LG2 in vitro. This Oryza sativa subsp. japonica (Rice) protein is Protein NEGATIVE REGULATOR OF RESISTANCE.